Here is a 537-residue protein sequence, read N- to C-terminus: Tyrosine-protein kinase Yes (537 aa).

Basic and acidic residues predominate over residues 1-22; sequence MGCIKSKEDKGPSIKYRTEPKP. The tract at residues 1-60 is disordered; it reads MGCIKSKEDKGPSIKYRTEPKPDPGSQYGADPTQATQSPGIKGPAPNFNSHSMTPFGGSS. Residue Gly-2 is the site of N-myristoyl glycine attachment. A lipid anchor (S-palmitoyl cysteine; in membrane form) is attached at Cys-3. The 62-residue stretch at 85 to 146 folds into the SH3 domain; the sequence is GGVTVFVALY…PSNYVAPADS (62 aa). The 98-residue stretch at 152-249 folds into the SH2 domain; it reads WYFGKMGRKD…GLCYRLTTVC (98 aa). A Protein kinase domain is found at 271–524; the sequence is LRLDVKLGQG…YIQSFLEDYF (254 aa). Residues 277–285 and Lys-299 contribute to the ATP site; that span reads LGQGCFGEV. Asp-390 serves as the catalytic Proton acceptor. Position 420 is a phosphotyrosine; by autocatalysis (Tyr-420). A Phosphotyrosine; by CSK modification is found at Tyr-531.

It belongs to the protein kinase superfamily. Tyr protein kinase family. SRC subfamily. Autophosphorylated at Tyr-420 inducing activation. Post-translationally, palmitoylation at Cys-3 promotes membrane localization.

The protein localises to the cell membrane. It localises to the cytoplasm. Its subcellular location is the cytoskeleton. The protein resides in the microtubule organizing center. It is found in the centrosome. The protein localises to the cytosol. It localises to the cell junction. The enzyme catalyses L-tyrosyl-[protein] + ATP = O-phospho-L-tyrosyl-[protein] + ADP + H(+). Functionally, non-receptor protein tyrosine kinase that is involved in the regulation of cell growth and survival, apoptosis, cell-cell adhesion, cytoskeleton remodeling, differentiation, G2/M progression and cytokinesis. The polypeptide is Tyrosine-protein kinase Yes (yes1) (Xenopus laevis (African clawed frog)).